Consider the following 166-residue polypeptide: Large ribosomal subunit protein uL10 (166 aa).

It belongs to the universal ribosomal protein uL10 family. As to quaternary structure, part of the ribosomal stalk of the 50S ribosomal subunit. The N-terminus interacts with L11 and the large rRNA to form the base of the stalk. The C-terminus forms an elongated spine to which L12 dimers bind in a sequential fashion forming a multimeric L10(L12)X complex.

In terms of biological role, forms part of the ribosomal stalk, playing a central role in the interaction of the ribosome with GTP-bound translation factors. In Alkaliphilus metalliredigens (strain QYMF), this protein is Large ribosomal subunit protein uL10.